Consider the following 222-residue polypeptide: Putative auxin response factor 23 (222 aa).

Residues 126-222 (FTKVLTASDT…ETGELRVGIR (97 aa)) constitute a DNA-binding region (TF-B3).

This sequence belongs to the ARF family. In terms of assembly, homo and heterodimers.

The protein resides in the nucleus. In terms of biological role, auxin response factors (ARFs) are transcriptional factors that binds specifically to the DNA sequence 5'-TGTCTC-3' found in the auxin-responsive promoter elements (AuxREs). Could act as transcriptional activator or repressor. Formation of heterodimers with Aux/IAA proteins may alter their ability to modulate early auxin response genes expression. The protein is Putative auxin response factor 23 (ARF23) of Arabidopsis thaliana (Mouse-ear cress).